The primary structure comprises 790 residues: Threonine--tRNA ligase 2, cytoplasmic (790 aa).

Residue alanine 2 is modified to N-acetylalanine. A coiled-coil region spans residues 13-68 (SRLQRQEEDIRWLCAEVQRLRDEQLRGPERGQAEGPRLTREVAQLQAENRDLHQRL). Residues 80–117 (RTEAGRAAAHEPPTQNQEKDTKKKRLKQSEPGREVKQP) are disordered. Positions 96-117 (QEKDTKKKRLKQSEPGREVKQP) are enriched in basic and acidic residues. Positions 148 to 210 (NVISVRVAGG…EGDSTVELLM (63 aa)) constitute a TGS domain. At serine 441 the chain carries Phosphoserine. A Nuclear localization signal motif is present at residues 774–780 (KLKNLKK).

The protein belongs to the class-II aminoacyl-tRNA synthetase family. In terms of assembly, may be a component of the multisynthetase complex (MSC), a large multi-subunit complex which contains at least eight different aminoacyl-tRNA synthetases plus three auxillary subunits AIMP1, AIMP2 and EEF1E1. Interacts with the MSC components EPRS1, AIMP1, AIMP2 and KARS1. Ubiquitous (at protein level). Strongly expressed in muscle (at protein level). Moderately expressed in heart and liver (at protein level). Weakly expressed in stomach, kidney, testis, spleen, brain, fat and lung (at protein level).

It localises to the cytoplasm. It is found in the nucleus. It catalyses the reaction tRNA(Thr) + L-threonine + ATP = L-threonyl-tRNA(Thr) + AMP + diphosphate + H(+). Functionally, catalyzes the attachment of threonine to tRNA(Thr) in a two-step reaction: threonine is first activated by ATP to form Thr-AMP and then transferred to the acceptor end of tRNA(Thr). Also edits incorrectly charged tRNA(Thr) via its editing domain, at the post-transfer stage. This Mus musculus (Mouse) protein is Threonine--tRNA ligase 2, cytoplasmic (Tars3).